Consider the following 559-residue polypeptide: Glucans biosynthesis protein G (559 aa).

An N-terminal signal peptide occupies residues 1-37 (MVSLLSCGTSASSHIVKKALTRLSLAMAAGLCFNLAA).

This sequence belongs to the OpgD/OpgG family.

It is found in the periplasm. It functions in the pathway glycan metabolism; osmoregulated periplasmic glucan (OPG) biosynthesis. In terms of biological role, involved in the biosynthesis of osmoregulated periplasmic glucans (OPGs). This is Glucans biosynthesis protein G from Shewanella frigidimarina (strain NCIMB 400).